The primary structure comprises 106 residues: Thiosulfate sulfurtransferase GlpE (106 aa).

The 89-residue stretch at 17–105 (EQGEAKLVDI…WQRAQLPIVR (89 aa)) folds into the Rhodanese domain. The Cysteine persulfide intermediate role is filled by Cys65.

The protein belongs to the GlpE family.

Its subcellular location is the cytoplasm. It catalyses the reaction thiosulfate + hydrogen cyanide = thiocyanate + sulfite + 2 H(+). The enzyme catalyses thiosulfate + [thioredoxin]-dithiol = [thioredoxin]-disulfide + hydrogen sulfide + sulfite + 2 H(+). Transferase that catalyzes the transfer of sulfur from thiosulfate to thiophilic acceptors such as cyanide or dithiols. May function in a CysM-independent thiosulfate assimilation pathway by catalyzing the conversion of thiosulfate to sulfite, which can then be used for L-cysteine biosynthesis. The sequence is that of Thiosulfate sulfurtransferase GlpE from Vibrio parahaemolyticus serotype O3:K6 (strain RIMD 2210633).